Here is a 251-residue protein sequence, read N- to C-terminus: Prolactin-7C1 (251 aa).

The signal sequence occupies residues M1–S30. N57 is a glycosylation site (N-linked (GlcNAc...) asparagine). 2 cysteine pairs are disulfide-bonded: C101–C217 and C234–C242.

Belongs to the somatotropin/prolactin family. In terms of tissue distribution, expressed exclusively in the placenta. Expressed in spongiotrophoblast cells and trophoblast giant cells of the junctional zone and in labyrinthine trophoblast.

The protein localises to the secreted. This Mus musculus (Mouse) protein is Prolactin-7C1 (Prl7c1).